Reading from the N-terminus, the 236-residue chain is Serine/arginine-rich SC35-like splicing factor SCL28 (236 aa).

Disordered stretches follow at residues 1–53 and 124–219; these read MARA…LIRN and EENR…RVLT. The span at 14 to 43 shows a compositional bias: basic and acidic residues; that stretch reads RPRDRSPPRERKGYDDNRLRERPSSRDHES. The region spanning 47–125 is the RRM domain; the sequence is SGLLIRNLPL…REIAIVFAEE (79 aa). Over residues 149–176 the composition is skewed to basic residues; that stretch reads TSHRSPRRRYRSHSRSRSPPRRESRHSK. Serine 184 carries the phosphoserine modification. Positions 199–217 are enriched in basic and acidic residues; it reads RNEREYKSRNCRSPREERV.

This sequence belongs to the splicing factor SR family. SCL subfamily. In terms of assembly, component of the spliceosome. Interacts with RS2Z33, CYP59, CYP63 and CYP95.

The protein resides in the nucleus speckle. In terms of biological role, involved in intron recognition and spliceosome assembly. Probably active at the 5' splice sites. This Arabidopsis thaliana (Mouse-ear cress) protein is Serine/arginine-rich SC35-like splicing factor SCL28 (SCL28).